Here is a 94-residue protein sequence, read N- to C-terminus: Acylphosphatase (94 aa).

An Acylphosphatase-like domain is found at 7-94 (AVRVRISGRV…NMPRDFRITG (88 aa)). Active-site residues include Arg-22 and Asn-40.

The protein belongs to the acylphosphatase family.

The catalysed reaction is an acyl phosphate + H2O = a carboxylate + phosphate + H(+). This is Acylphosphatase (acyP) from Rhizobium etli (strain ATCC 51251 / DSM 11541 / JCM 21823 / NBRC 15573 / CFN 42).